Reading from the N-terminus, the 149-residue chain is Deoxyuridine 5'-triphosphate nucleotidohydrolase (149 aa).

Substrate is bound by residues 68–70, Asn-81, 85–87, and Met-95; these read RSG and LID.

The protein belongs to the dUTPase family. The cofactor is Mg(2+).

The enzyme catalyses dUTP + H2O = dUMP + diphosphate + H(+). The protein operates within pyrimidine metabolism; dUMP biosynthesis; dUMP from dCTP (dUTP route): step 2/2. This enzyme is involved in nucleotide metabolism: it produces dUMP, the immediate precursor of thymidine nucleotides and it decreases the intracellular concentration of dUTP so that uracil cannot be incorporated into DNA. This is Deoxyuridine 5'-triphosphate nucleotidohydrolase from Bordetella bronchiseptica (strain ATCC BAA-588 / NCTC 13252 / RB50) (Alcaligenes bronchisepticus).